The sequence spans 215 residues: Pyrrolidone-carboxylate peptidase (215 aa).

Residues Glu80, Cys143, and His167 contribute to the active site.

It belongs to the peptidase C15 family. As to quaternary structure, homotetramer.

It is found in the cytoplasm. It carries out the reaction Release of an N-terminal pyroglutamyl group from a polypeptide, the second amino acid generally not being Pro.. Its function is as follows. Removes 5-oxoproline from various penultimate amino acid residues except L-proline. The sequence is that of Pyrrolidone-carboxylate peptidase from Yersinia pestis bv. Antiqua (strain Antiqua).